A 499-amino-acid chain; its full sequence is UPF0159 protein Ta1429 (499 aa).

ThyX domains lie at 1–246 (MIDR…ALSQ) and 271–476 (EKVR…IKFV).

Belongs to the UPF0159 family.

The protein is UPF0159 protein Ta1429 of Thermoplasma acidophilum (strain ATCC 25905 / DSM 1728 / JCM 9062 / NBRC 15155 / AMRC-C165).